Reading from the N-terminus, the 351-residue chain is MLEINIHQQLGSLNLTVNLHIAAKGVTAILGRSGAGKSSLINLIAGLTTAQRGYIKLGEQTLYDHEQGINLAPEKRHIGYVFQEHRLFPHYSVAKNLKYGCKRVDNAHFLQIVKLLGIEHLLNRYPSSLSGGEKQRVAIGRALLTKPQILLMDEPLSALDLPRKQELITYLSQLANQVDIPILYVTHSLDEIIRLADQLILLEQGKIIAFDLVVNVWHSDILADWQSETQKISLLELPLNIQQPIYKMVGLKLGKQHIWIPATPHYKIGDKLRITIASKDVSISLDQVQHSSIRNILNGVITQIVEHNDRVDIAVLIETHQIWASISLWSFDELALKIGQQIYVQIKSVSL.

Positions 1–229 constitute an ABC transporter domain; it reads MLEINIHQQL…DILADWQSET (229 aa). 31-38 contributes to the ATP binding site; the sequence is GRSGAGKS. The Mop domain maps to 290-351; the sequence is HSSIRNILNG…IYVQIKSVSL (62 aa).

Belongs to the ABC transporter superfamily. Molybdate importer (TC 3.A.1.8) family. In terms of assembly, the complex is composed of two ATP-binding proteins (ModC), two transmembrane proteins (ModB) and a solute-binding protein (ModA).

It localises to the cell inner membrane. It catalyses the reaction molybdate(out) + ATP + H2O = molybdate(in) + ADP + phosphate + H(+). Functionally, part of the ABC transporter complex ModABC involved in molybdenum import. Responsible for energy coupling to the transport system. This Haemophilus ducreyi (strain 35000HP / ATCC 700724) protein is Molybdenum import ATP-binding protein ModC.